The following is a 908-amino-acid chain: DNA mismatch repair protein MutS (908 aa).

Residue 662 to 669 (GPNMGGKS) participates in ATP binding.

The protein belongs to the DNA mismatch repair MutS family.

In terms of biological role, this protein is involved in the repair of mismatches in DNA. It is possible that it carries out the mismatch recognition step. This protein has a weak ATPase activity. This Rhizobium etli (strain ATCC 51251 / DSM 11541 / JCM 21823 / NBRC 15573 / CFN 42) protein is DNA mismatch repair protein MutS.